The following is a 425-amino-acid chain: Stabilizer of axonemal microtubules 4 (425 aa).

Disordered regions lie at residues 93-126, 203-225, and 316-335; these read PLEV…PPTK, EGSG…SQAL, and KEPT…PCDP. The segment covering 207-222 has biased composition (polar residues); that stretch reads FTKQSHQSPIVFQPPS.

Microtubule inner protein component of sperm flagellar doublet microtubules. Interacts with PPP1CA.

The protein localises to the cell projection. The protein resides in the cilium. Its subcellular location is the cytoplasm. It is found in the cytoskeleton. It localises to the flagellum axoneme. This is Stabilizer of axonemal microtubules 4 from Homo sapiens (Human).